Reading from the N-terminus, the 180-residue chain is MAEDNLCALFFKLTVQGVTCSDGLKKHMENAEDELKPLLEHGPQGESMDIDEEEVSGAKRLLYLYVDCPTMMRCFFGRSMPYNCRGGTLLTDLPPYHADASPHEVSRGLGKATDFFSYEDAIRSAYFAAFSFSGPVRKLDQQLELTSTRGEPLTFSLYARSPGRLEPGELVRHGECKFAG.

Accumulates in young leaves and shoot tips.

Hydrolyzes cytokinin glucosides thus liberating free cytokinins. This is Cytokinin-beta-glucosidase (TROLC) from Nicotiana tabacum (Common tobacco).